Here is an 842-residue protein sequence, read N- to C-terminus: MLFSLRNFISYSNLYLYKNVCIGGQLLLNQDEILKKMEEWPKHYNPKEIEEKWQKIWLSEEYWRDVFRFRDEDDKAPRFVIDTPPPFTSGELHMGHAYWVTIADTIGRFKRLEGYNVLLPQGWDTQGLPTELKVQYKLGIPKDNRQLFLQKCIEWTEEMIKKMKEAMIRLGYRPEWERFEYKTYEPKYRKIIQKSLIDMYKMNLIEMREGPVIWCPKCETALAQSEVGYLEKEGILAYIKFPLKEGGEIVIATTRPELLAATQAIAVNPMDERYKNLVGKIALVPIFNIEVKIISDADVEKEFGTGAVMISTYGDPQDIKWQLKYNLPIKVIVDEKGRIINTNGILDGLKIEQARNKMIELLKTKGYLVKVEKIKHNVLSHVERSDCLSPVEFLVKKQIYIKVLDKKQKLLEEYKKMKFKPARMSYYLEDWIKSIEWDWNITRQRIYGTPLPFWYCENGHLVPAKEEDLPIDPIKTSPPLEKCPLCGSELKPVTDVADVWIDSSVTVLYLTKFYEDKNVFNRTFPASLRLQGTDIIRTWLFYTFFRTLMLANNVPFTTVLVNGQVLGPDGTRMSKSKGNVVSPLDRVNDFGADAIRMALLDASIGDDFPFKWDIVKGKKMLLQKLWNASRLVYPFIAKQRLDKPKSLHIVDKWILQEHKKFVTKAINAYENYDFYLVLQELYNYFWEIVADEYLEMIKHRLFDDDNSAKYTIQRIIRDIIILLHPIAPHITEEIYSRLFGHKKSVLLEELPKVDDIEENKRIDELGEVIKKTNSLIRSEKIKNRLSMNTPVSVKLYASKQVIELINEVKDDVMKTLKVTNLELIESNEEKVEIKTANQSMGV.

A 'HIGH' region motif is present at residues 86 to 96 (PFTSGELHMGH). Residues 572–576 (RMSKS) carry the 'KMSKS' region motif. An ATP-binding site is contributed by K575.

It belongs to the class-I aminoacyl-tRNA synthetase family. ValS type 2 subfamily.

The protein resides in the cytoplasm. The enzyme catalyses tRNA(Val) + L-valine + ATP = L-valyl-tRNA(Val) + AMP + diphosphate. In terms of biological role, catalyzes the attachment of valine to tRNA(Val). As ValRS can inadvertently accommodate and process structurally similar amino acids such as threonine, to avoid such errors, it has a 'posttransfer' editing activity that hydrolyzes mischarged Thr-tRNA(Val) in a tRNA-dependent manner. This is Valine--tRNA ligase from Saccharolobus solfataricus (strain ATCC 35092 / DSM 1617 / JCM 11322 / P2) (Sulfolobus solfataricus).